We begin with the raw amino-acid sequence, 45 residues long: Metallothionein-like protein 1C (45 aa).

The protein belongs to the metallothionein superfamily. Type 15 family. In terms of tissue distribution, widely expressed at low levels.

Metallothioneins have a high content of cysteine residues that bind various heavy metals. Confers tolerance to cadmium (Cd) and plays a role in Cd and zinc (Zn) homeostasis. This chain is Metallothionein-like protein 1C (MT1C), found in Arabidopsis thaliana (Mouse-ear cress).